A 1089-amino-acid polypeptide reads, in one-letter code: Probable transport protein MmpL8 (1089 aa).

The segment at Met1–Thr26 is disordered. Transmembrane regions (helical) follow at residues Trp44–Leu64, Ile222–Leu242, Leu257–Ser277, Ile316–Phe336, Leu349–Val369, Lys400–Ala420, Ala555–Gly575, Ile874–Val894, Tyr898–Phe918, Ile930–Ile950, Gly973–Ala993, and Gly996–Val1016. Residues Arg1056–Leu1078 form a disordered region. Residues Glu1066 to Leu1078 show a composition bias toward acidic residues.

This sequence belongs to the resistance-nodulation-cell division (RND) (TC 2.A.6) family. MmpL subfamily.

The protein resides in the cell membrane. In Mycobacterium bovis (strain ATCC BAA-935 / AF2122/97), this protein is Probable transport protein MmpL8 (mmpL8).